Consider the following 458-residue polypeptide: Tetratricopeptide repeat protein 23-like (458 aa).

Coiled coils occupy residues 175-198 (GKQA…LNNG) and 246-278 (TSEL…QAYS).

The protein resides in the cytoplasm. It localises to the cytoskeleton. It is found in the microtubule organizing center. The protein localises to the centrosome. Its subcellular location is the spindle. The protein resides in the midbody. The sequence is that of Tetratricopeptide repeat protein 23-like (Ttc23l) from Mus musculus (Mouse).